Reading from the N-terminus, the 449-residue chain is Packaging protein 1 (449 aa).

Positions 1–78 (METRGRRPAA…PAKRGDMLDR (78 aa)) are disordered. 171–178 (GPTGCGKS) contributes to the ATP binding site. A DNA-binding region spans residues 440-449 (RAYRARKTPK).

The protein belongs to the adenoviridae packaging protein 1 family. Homodimer. Part of a genome packaging complex composed of packaging proteins 1, 2 and 3; this complex specifically binds to the packaging sequence on the left end of viral genomic DNA and performs packaging of the viral genome. Interacts with protein 33K.

It localises to the virion. The protein localises to the host nucleus. The protein resides in the host nucleoplasm. Its subcellular location is the host nucleolus. Its function is as follows. Component of the packaging machinery which encapsidates the viral DNA into preformed capsids and transcriptional activator of the viral major late promoter (MLP). Binds, along with packaging proteins 2 and 3, to the specific packaging sequence on the left end of viral genomic DNA and displays ATPase activity thereby providing the power stroke of the packaging machinery. The activity of packaging protein IVa2 is stimulated by protein 33K which acts as a terminase. May be the protein that pumps DNA into the capsid powered by ATP hydrolysis. Specifically binds to the 5'-CG-3' nucleotides of the repeats making up the packaging sequence. Component of the DEF-A and DEF-B transcription factors that bind downstream elements of the major late promoter (MLP), and stimulate transcription from the MLP after initiation of viral DNA replication. DEF-A is a heterodimer packaging proteins 1 and 2 and DEF-B is a homodimer of packaging protein 1. This Human adenovirus C serotype 5 (HAdV-5) protein is Packaging protein 1.